The primary structure comprises 95 residues: Integration host factor subunit beta (95 aa).

This sequence belongs to the bacterial histone-like protein family. As to quaternary structure, heterodimer of an alpha and a beta chain.

Its function is as follows. This protein is one of the two subunits of integration host factor, a specific DNA-binding protein that functions in genetic recombination as well as in transcriptional and translational control. This is Integration host factor subunit beta from Erwinia tasmaniensis (strain DSM 17950 / CFBP 7177 / CIP 109463 / NCPPB 4357 / Et1/99).